Consider the following 302-residue polypeptide: Sulfate adenylyltransferase subunit 2 (302 aa).

It belongs to the PAPS reductase family. CysD subfamily. Heterodimer composed of CysD, the smaller subunit, and CysN.

The catalysed reaction is sulfate + ATP + H(+) = adenosine 5'-phosphosulfate + diphosphate. The protein operates within sulfur metabolism; hydrogen sulfide biosynthesis; sulfite from sulfate: step 1/3. With CysN forms the ATP sulfurylase (ATPS) that catalyzes the adenylation of sulfate producing adenosine 5'-phosphosulfate (APS) and diphosphate, the first enzymatic step in sulfur assimilation pathway. APS synthesis involves the formation of a high-energy phosphoric-sulfuric acid anhydride bond driven by GTP hydrolysis by CysN coupled to ATP hydrolysis by CysD. This chain is Sulfate adenylyltransferase subunit 2, found in Psychromonas ingrahamii (strain DSM 17664 / CCUG 51855 / 37).